A 233-amino-acid chain; its full sequence is Large ribosomal subunit protein eL6z (233 aa).

The segment at 175 to 195 (EFFEAEKEEKKEIPQEKKEDQ) is disordered.

It belongs to the eukaryotic ribosomal protein eL6 family.

This is Large ribosomal subunit protein eL6z (RPL6A) from Arabidopsis thaliana (Mouse-ear cress).